The chain runs to 210 residues: Probable glutathione peroxidase 8 (210 aa).

The helical transmembrane segment at 21-40 (VLLSMTVGVGCLLLLQTQLL) threads the bilayer.

It belongs to the glutathione peroxidase family.

It is found in the membrane. The enzyme catalyses 2 glutathione + H2O2 = glutathione disulfide + 2 H2O. In Tetraodon nigroviridis (Spotted green pufferfish), this protein is Probable glutathione peroxidase 8 (gpx8).